The primary structure comprises 314 residues: Dihydroorotate dehydrogenase (fumarate) (314 aa).

Substrate-binding positions include lysine 46, 70–74, and asparagine 130; that span reads NSMGL. 46–47 is a binding site for FMN; it reads KS. Asparagine 130 serves as a coordination point for FMN. Active-site nucleophile residues include serine 132 and cysteine 133. FMN is bound by residues lysine 167 and isoleucine 195. 196–197 serves as a coordination point for substrate; sequence NS. Residues glycine 224, 252 to 253, and 274 to 275 contribute to the FMN site; these read GG and GT.

Belongs to the dihydroorotate dehydrogenase family. Type 1 subfamily. In terms of assembly, homodimer. Requires FMN as cofactor.

It is found in the cytoplasm. It carries out the reaction (S)-dihydroorotate + fumarate = orotate + succinate. Its pathway is pyrimidine metabolism; UMP biosynthesis via de novo pathway. With respect to regulation, the activity is independent of the presence of oxygen. Functionally, catalyzes the conversion of dihydroorotate to orotate with fumarate as the electron acceptor. The sequence is that of Dihydroorotate dehydrogenase (fumarate) (URA1) from Lachancea kluyveri (strain ATCC 58438 / CBS 3082 / BCRC 21498 / NBRC 1685 / JCM 7257 / NCYC 543 / NRRL Y-12651) (Yeast).